We begin with the raw amino-acid sequence, 487 residues long: 2-aminomuconic semialdehyde dehydrogenase (487 aa).

NAD(+) is bound at residue 231-236 (GSQPTA). The Proton acceptor role is filled by glutamate 253. Cysteine 287 acts as the Nucleophile in catalysis. Serine 362 bears the Phosphoserine mark.

It belongs to the aldehyde dehydrogenase family. Detected in hepatocytes and in proximal and distal convoluted tubules in kidney cortex (at protein level). Highly expressed in adult liver and in kidney cortex. First detected in embryonic liver after 15 days of development.

The protein localises to the cytoplasm. The catalysed reaction is 2-aminomuconate 6-semialdehyde + NAD(+) + H2O = (2Z,4E)-2-aminomuconate + NADH + 2 H(+). It participates in amino-acid degradation; L-kynurenine degradation. Functionally, catalyzes the NAD-dependent oxidation of 2-aminomuconic semialdehyde of the kynurenine metabolic pathway in L-tryptophan degradation. This Mus musculus (Mouse) protein is 2-aminomuconic semialdehyde dehydrogenase (Aldh8a1).